Reading from the N-terminus, the 364-residue chain is MIRAFDAVSLPLLRWLDPEDAHRLAIQGLKLWPPVKPRPDDSKLAVRAFGLNFSNPVGIAAGFDKNAEAPDALLRLGFGFVEVGTVTPKPQAGNPRPRLFRLERDEAVINRMGFNNEGAEVVLRRLAARAQYGGIVGVNVGANKDSDDRVADYVKLIETFAPLASYFTVNVSSPNTPGLRNLQQAAALDDLLARVIDARERVRAAAGDTPVLLKIAPDLSLGELDDVVHIARSRRVDGMIVANTTLSRSPTLRERTKMNEQGGLSGRPLFRLSTRMVAETFVRAEGAFPLIGVGGIDSGGAALTKIRAGATLVQLYSALVYKGLGLVESIKADLASTLLRTDRDSLAEIVGADAPMITAEEWPV.

Residues Ala-61–Lys-65 and Thr-85 contribute to the FMN site. Lys-65 lines the substrate pocket. Position 110 to 114 (Asn-110 to Phe-114) interacts with substrate. 2 residues coordinate FMN: Asn-139 and Asn-170. Asn-170 is a binding site for substrate. Ser-173 acts as the Nucleophile in catalysis. Position 175 (Asn-175) interacts with substrate. The FMN site is built by Lys-214 and Ala-242. Asn-243–Thr-244 provides a ligand contact to substrate. Residues Gly-266, Gly-295, and Tyr-316–Ser-317 each bind FMN.

The protein belongs to the dihydroorotate dehydrogenase family. Type 2 subfamily. In terms of assembly, monomer. The cofactor is FMN.

Its subcellular location is the cell membrane. The enzyme catalyses (S)-dihydroorotate + a quinone = orotate + a quinol. It functions in the pathway pyrimidine metabolism; UMP biosynthesis via de novo pathway; orotate from (S)-dihydroorotate (quinone route): step 1/1. Catalyzes the conversion of dihydroorotate to orotate with quinone as electron acceptor. This chain is Dihydroorotate dehydrogenase (quinone), found in Rhodopseudomonas palustris (strain ATCC BAA-98 / CGA009).